The sequence spans 434 residues: Enolase (434 aa).

(2R)-2-phosphoglycerate is bound at residue Gln163. Glu205 functions as the Proton donor in the catalytic mechanism. Asp243, Glu291, and Asp318 together coordinate Mg(2+). (2R)-2-phosphoglycerate-binding residues include Lys343, Arg372, Ser373, and Lys394. Catalysis depends on Lys343, which acts as the Proton acceptor.

This sequence belongs to the enolase family. It depends on Mg(2+) as a cofactor.

It localises to the cytoplasm. Its subcellular location is the secreted. The protein resides in the cell surface. It catalyses the reaction (2R)-2-phosphoglycerate = phosphoenolpyruvate + H2O. Its pathway is carbohydrate degradation; glycolysis; pyruvate from D-glyceraldehyde 3-phosphate: step 4/5. In terms of biological role, catalyzes the reversible conversion of 2-phosphoglycerate (2-PG) into phosphoenolpyruvate (PEP). It is essential for the degradation of carbohydrates via glycolysis. The sequence is that of Enolase from Fusobacterium nucleatum subsp. nucleatum (strain ATCC 25586 / DSM 15643 / BCRC 10681 / CIP 101130 / JCM 8532 / KCTC 2640 / LMG 13131 / VPI 4355).